The chain runs to 561 residues: Asparagine synthetase [glutamine-hydrolyzing] (561 aa).

The active-site For GATase activity is the Cys-2. One can recognise a Glutamine amidotransferase type-2 domain in the interval 2–191 (CGIWALFGSD…PGHYEVLDLK (190 aa)). L-glutamine contacts are provided by residues 49–53 (RLAVV), 75–77 (NGE), and Asp-97. Residues 213–536 (HALYDNVEKL…PGRADWLSHY (324 aa)) enclose the Asparagine synthetase domain. Residues Leu-256, Ile-288, and 363–364 (SG) each bind ATP. At Lys-385 the chain carries N6-acetyllysine. At Thr-545 the chain carries Phosphothreonine. A Phosphoserine modification is found at Ser-557.

It catalyses the reaction L-aspartate + L-glutamine + ATP + H2O = L-asparagine + L-glutamate + AMP + diphosphate + H(+). The protein operates within amino-acid biosynthesis; L-asparagine biosynthesis; L-asparagine from L-aspartate (L-Gln route): step 1/1. In Homo sapiens (Human), this protein is Asparagine synthetase [glutamine-hydrolyzing] (ASNS).